Reading from the N-terminus, the 315-residue chain is Ribosomal protein L11 methyltransferase (315 aa).

Residues T162, G183, D205, and N248 each contribute to the S-adenosyl-L-methionine site.

Belongs to the methyltransferase superfamily. PrmA family.

The protein resides in the cytoplasm. The catalysed reaction is L-lysyl-[protein] + 3 S-adenosyl-L-methionine = N(6),N(6),N(6)-trimethyl-L-lysyl-[protein] + 3 S-adenosyl-L-homocysteine + 3 H(+). In terms of biological role, methylates ribosomal protein L11. The sequence is that of Ribosomal protein L11 methyltransferase from Enterococcus faecalis (strain ATCC 700802 / V583).